We begin with the raw amino-acid sequence, 556 residues long: Formate--tetrahydrofolate ligase (556 aa).

Residue 65 to 72 (TPAGEGKT) coordinates ATP.

This sequence belongs to the formate--tetrahydrofolate ligase family.

It carries out the reaction (6S)-5,6,7,8-tetrahydrofolate + formate + ATP = (6R)-10-formyltetrahydrofolate + ADP + phosphate. It functions in the pathway one-carbon metabolism; tetrahydrofolate interconversion. This Acetivibrio thermocellus (strain ATCC 27405 / DSM 1237 / JCM 9322 / NBRC 103400 / NCIMB 10682 / NRRL B-4536 / VPI 7372) (Clostridium thermocellum) protein is Formate--tetrahydrofolate ligase.